The sequence spans 195 residues: Glycerol-3-phosphate acyltransferase (195 aa).

Helical transmembrane passes span 7–27 (IFIL…SYVI), 52–72 (LALL…AIAQ), 80–100 (ILFL…YLFF), 113–133 (LIFI…ICFL), and 147–167 (LIAL…IFTI).

This sequence belongs to the PlsY family. As to quaternary structure, probably interacts with PlsX.

It localises to the cell inner membrane. It catalyses the reaction an acyl phosphate + sn-glycerol 3-phosphate = a 1-acyl-sn-glycero-3-phosphate + phosphate. It functions in the pathway lipid metabolism; phospholipid metabolism. In terms of biological role, catalyzes the transfer of an acyl group from acyl-phosphate (acyl-PO(4)) to glycerol-3-phosphate (G3P) to form lysophosphatidic acid (LPA). This enzyme utilizes acyl-phosphate as fatty acyl donor, but not acyl-CoA or acyl-ACP. In Ehrlichia ruminantium (strain Welgevonden), this protein is Glycerol-3-phosphate acyltransferase.